A 283-amino-acid chain; its full sequence is Pantothenate synthetase (283 aa).

Residue 30–37 (MGNLHDAH) coordinates ATP. The active-site Proton donor is the histidine 37. Glutamine 61 provides a ligand contact to (R)-pantoate. Glutamine 61 is a beta-alanine binding site. Residue 149-152 (GVKD) coordinates ATP. Glutamine 155 is a (R)-pantoate binding site. ATP is bound by residues valine 178 and 186-189 (MSSR).

This sequence belongs to the pantothenate synthetase family. Homodimer.

Its subcellular location is the cytoplasm. The catalysed reaction is (R)-pantoate + beta-alanine + ATP = (R)-pantothenate + AMP + diphosphate + H(+). It participates in cofactor biosynthesis; (R)-pantothenate biosynthesis; (R)-pantothenate from (R)-pantoate and beta-alanine: step 1/1. Functionally, catalyzes the condensation of pantoate with beta-alanine in an ATP-dependent reaction via a pantoyl-adenylate intermediate. The chain is Pantothenate synthetase from Cellvibrio japonicus (strain Ueda107) (Pseudomonas fluorescens subsp. cellulosa).